Consider the following 338-residue polypeptide: DNA-directed RNA polymerase subunit alpha (338 aa).

The interval 1 to 234 (MIERNWNELI…DQLQIFITFE (234 aa)) is alpha N-terminal domain (alpha-NTD). The interval 250-338 (FNPALLKKVD…DLAKKFEDQI (89 aa)) is alpha C-terminal domain (alpha-CTD).

This sequence belongs to the RNA polymerase alpha chain family. As to quaternary structure, homodimer. The RNAP catalytic core consists of 2 alpha, 1 beta, 1 beta' and 1 omega subunit. When a sigma factor is associated with the core the holoenzyme is formed, which can initiate transcription.

It catalyses the reaction RNA(n) + a ribonucleoside 5'-triphosphate = RNA(n+1) + diphosphate. Functionally, DNA-dependent RNA polymerase catalyzes the transcription of DNA into RNA using the four ribonucleoside triphosphates as substrates. The chain is DNA-directed RNA polymerase subunit alpha from Caulobacter vibrioides (strain ATCC 19089 / CIP 103742 / CB 15) (Caulobacter crescentus).